A 254-amino-acid chain; its full sequence is uncharacterized protein (254 aa).

In terms of domain architecture, ABC transporter spans 6-239; the sequence is LSVDGVEFAY…NIKAVYGVDA (234 aa). Position 38–45 (38–45) interacts with ATP; the sequence is GVNGAGKS.

The protein belongs to the ABC transporter superfamily.

This is an uncharacterized protein from Methanocaldococcus jannaschii (strain ATCC 43067 / DSM 2661 / JAL-1 / JCM 10045 / NBRC 100440) (Methanococcus jannaschii).